The primary structure comprises 1345 residues: MKEATDDYDLSKLVSNFYRLEKITKINYAQYLPKKQNDQWGIQMEIQMRKKDRKLLVALLSKELWCFSINDQVLPSPNDIDPELNVSADKTGSFTADYSKPNLPPHYALFLKSLKRMIYLNLVEQSKNTLVQFGNSCINITKNNESNNLLQIEPHLFSNSELAISICVKDLGLLPLKVNSIDPAFLSSHALYMAPSGVRVYLVENKNDNSGTNQEHLHKYLVPVPENGEVLLKTLYASHGIKLNSSTCQWVNIIPNITHLNGRAPNISQYMDLPKELRTIVWPLDLVFAQPALDIDSSTTLSQINGLDTFEDTLSLIDNFLQLKQSSSYRTPGSSGGLTGTNIGTNVFSSEGAYTDQFQVYPKSQTNQQQTSSNSKVSPSDAASPYPGIDKIIEQKQFTPDFMASPSVSGNSNELFNDRKNGHTDLLISPSKMDVDTDFPGSNLAGQEAPSQPASDVKKSSVSASDSELFGEEDEDEDDADLFGESNNDSTGESNANNSKGEITEDIFASSDDESSLQPKKESTFYDGIKNGSAESGLNMQDRANLKRTYLDIRIEETPLSSPLYTDPGAPLPVETPRDRRKSVFAPLNFNPIIAKDVDNKYKNGGKYSFSPLQKEEALNFDVSRTELSSSEGEDSESSDDELEDLANKNDGVVYDKAENIGYKTFANLQDSVPPGLIKQDFLGNPYLASLEGSKEGQNTIWKMPQTDIAQTESPLKAIDTSIGPDGTLPNTTSSEQSKSVYVHDYGISPTKMSNDPAFDTAKIEGKYEFMNNFPSSFPFLLRHMPLSLIPDTFKHLNPTITVNERNNQIIDLLAEQIVYDYNILGNLTIPDVPYSGIRNYSNGVVKNTIDNLFSEFTRLDGTTLISRLYPMETPFVSVRKQHDQIKLRSDVQQFTKYANLKPVRGIKNFKFLVLTDSFKEDCIQFISSLSQTYINHELGFCEHLQLTNEDSKGLIYLKDFEDSKLLLLAAQIVSYLSTNRTSGKEVAFMMIIPVQRCDISELVEKTAKFQIIQNEVKAKIPSMELYLKIVPMDFIKSPLTSVDDYTNLCISIYNILPNKMIKFTHIRKQIPEKLTFKTSQQASAFKYDAYIHLAYSRSVDKQWMFAALSDSAGKENMMKTWYLGSSKNKFDEACNHIWEMALSLAGKNYGKVCLILTRLNGILPDDELMNWRRLSGRNIHLAVVCVDDNTKISFFDRNESYPSYKRLYQNANSIETLVDPERIDDYLIRDLDQDIHGVIFENPFPLVNSLHRCAIKSGALVKFNVSTTATEPHSLDKFEVNLLNCPHSDSFKLLETILEEFRNLAALNVWFGITNGENGHIPWHVLAVKKMMKTLVHTRVKVAQ.

Disordered stretches follow at residues 363 to 387 and 402 to 537; these read KSQT…SPYP and FMAS…AESG. The segment covering 364–375 has biased composition (low complexity); the sequence is SQTNQQQTSSNS. Positions 406-415 are enriched in polar residues; the sequence is PSVSGNSNEL. Positions 469 to 482 are enriched in acidic residues; the sequence is LFGEEDEDEDDADL. The span at 486 to 501 shows a compositional bias: polar residues; sequence SNNDSTGESNANNSKG.

This sequence belongs to the Mediator complex subunit 13 family. Component of the SRB8-11 complex, which itself associates with the Mediator complex.

Its subcellular location is the nucleus. In terms of biological role, component of the SRB8-11 complex. The SRB8-11 complex is a regulatory module of the Mediator complex which is itself involved in regulation of basal and activated RNA polymerase II-dependent transcription. The SRB8-11 complex may be involved in the transcriptional repression of a subset of genes regulated by Mediator. It may inhibit the association of the Mediator complex with RNA polymerase II to form the holoenzyme complex. The protein is Mediator of RNA polymerase II transcription subunit 13 (SSN2) of Candida glabrata (strain ATCC 2001 / BCRC 20586 / JCM 3761 / NBRC 0622 / NRRL Y-65 / CBS 138) (Yeast).